A 610-amino-acid polypeptide reads, in one-letter code: UvrABC system protein C (610 aa).

The GIY-YIG domain maps to 16 to 94 (SQPGVYRMYD…IKLYQPRYNV (79 aa)). Residues 204–239 (DQVLTQLIARMEKASQDLAFEEAARIRDQIQAVRRV) form the UVR domain.

It belongs to the UvrC family. In terms of assembly, interacts with UvrB in an incision complex.

The protein localises to the cytoplasm. Its function is as follows. The UvrABC repair system catalyzes the recognition and processing of DNA lesions. UvrC both incises the 5' and 3' sides of the lesion. The N-terminal half is responsible for the 3' incision and the C-terminal half is responsible for the 5' incision. The polypeptide is UvrABC system protein C (Salmonella typhi).